Reading from the N-terminus, the 93-residue chain is Small ribosomal subunit protein bS16 (93 aa).

It belongs to the bacterial ribosomal protein bS16 family.

This Opitutus terrae (strain DSM 11246 / JCM 15787 / PB90-1) protein is Small ribosomal subunit protein bS16.